The chain runs to 84 residues: Small ribosomal subunit protein bS18 (84 aa).

The protein belongs to the bacterial ribosomal protein bS18 family. Part of the 30S ribosomal subunit. Forms a tight heterodimer with protein bS6.

In terms of biological role, binds as a heterodimer with protein bS6 to the central domain of the 16S rRNA, where it helps stabilize the platform of the 30S subunit. In Vesicomyosocius okutanii subsp. Calyptogena okutanii (strain HA), this protein is Small ribosomal subunit protein bS18.